The chain runs to 127 residues: Thioredoxin (127 aa).

Residues 2–115 (SDGVKHINSA…LRAAAEKMGR (114 aa)) form the Thioredoxin domain. Residues Cys-33 and Cys-36 each act as nucleophile in the active site. The cysteines at positions 33 and 36 are disulfide-linked.

It belongs to the thioredoxin family.

In terms of biological role, participates in various redox reactions through the reversible oxidation of its active center dithiol to a disulfide and catalyzes dithiol-disulfide exchange reactions. In Neurospora crassa (strain ATCC 24698 / 74-OR23-1A / CBS 708.71 / DSM 1257 / FGSC 987), this protein is Thioredoxin (trx).